Reading from the N-terminus, the 109-residue chain is Ribonuclease P protein component (109 aa).

It belongs to the RnpA family. In terms of assembly, consists of a catalytic RNA component (M1 or rnpB) and a protein subunit.

It catalyses the reaction Endonucleolytic cleavage of RNA, removing 5'-extranucleotides from tRNA precursor.. Its function is as follows. RNaseP catalyzes the removal of the 5'-leader sequence from pre-tRNA to produce the mature 5'-terminus. It can also cleave other RNA substrates such as 4.5S RNA. The protein component plays an auxiliary but essential role in vivo by binding to the 5'-leader sequence and broadening the substrate specificity of the ribozyme. The chain is Ribonuclease P protein component from Nitratiruptor sp. (strain SB155-2).